The sequence spans 463 residues: FAD-dependent monooxygenase nodM (463 aa).

Residues 5-25 form a helical membrane-spanning segment; that stretch reads EFKVIIVGGSLAGLTLAHCLL. FAD contacts are provided by E35, G49, R108, D305, and A318. The chain crosses the membrane as a helical span at residues 438–458; sequence ILLGFTGVFTSALAMVVLLHI.

Belongs to the paxM FAD-dependent monooxygenase family. It depends on FAD as a cofactor.

It localises to the membrane. Its pathway is secondary metabolite biosynthesis. Functionally, FAD-dependent monooxygenase; part of the gene cluster that mediates the biosynthesis of the indole diterpenes nodulisporic acids (NA). Nodulisporic acid A (NAA) and its chemically modified derivatives are of particular significance because of their highly potent insecticidal activity against blood-feeding arthropods and lack of observable adverse effects on mammals, in particular the tremogenicity associated with the paspaline-derived IDTs is not observed. The geranylgeranyl diphosphate (GGPP) synthase ggs1, localized outside of the cluster, is proposed to catalyze the first step in nodulisporic acid biosynthesis via conversion of farnesyl pyrophosphate and isopentyl pyrophosphate into geranylgeranyl pyrophosphate (GGPP). Condensation of indole-3-glycerol phosphate with GGPP by the prenyl transferase nodC then forms 3-geranylgeranylindole (3-GGI). Epoxidation by the FAD-dependent monooxygenase nodM leads to a single-epoxidized-GGI that is substrate of the terpene cyclase nodB for cyclization to yield emindole SB. The terminal methyl carbon, C28, of emindole SB is then oxidized by the cytochrome P450 monooxygenase nodW to produce nodulisporic acid F (NAF), the pentacyclic core of NAA. NAF is converted to nodulisporic acid E (NAE) via prenylation. This step is probably performed by one of the indole diterpene prenyltransferases nodD1 or nodD2. Several oxidation steps performed by the FAD-linked oxidoreductase nodO and one of the cytochrome P450 monooxygenase nodR, nodX or nodZ further convert NAE to nodulisporic acid D (NAD). NAD is substrate of cytochrome P450 monooxygenase nodJ to produce the precursor of nodulisporic acid C (NAC), converted to NAC by one of the indole diterpene prenyltransferases nodD1 or nodD2. The FAD-dependent monooxygenase nodY2 then oxidizes NAC to nodulisporic acid B (NAB). Finally NAB is converted to NAA by one of the cytochrome P450 monooxygenases nodR, nodX or nodZ. In Hypoxylon pulicicidum, this protein is FAD-dependent monooxygenase nodM.